Reading from the N-terminus, the 134-residue chain is Protein LctB (134 aa).

The sequence is that of Protein LctB (lctB) from Bacillus caldotenax.